Consider the following 123-residue polypeptide: Ig heavy chain V region H8 (123 aa).

The Ig-like domain maps to 1-114; it reads EVKLVESGGG…BSYWYFDVWG (114 aa).

The sequence is that of Ig heavy chain V region H8 from Mus musculus (Mouse).